The chain runs to 247 residues: Probable transcriptional regulatory protein GSU1074 (247 aa).

It belongs to the TACO1 family.

It localises to the cytoplasm. This Geobacter sulfurreducens (strain ATCC 51573 / DSM 12127 / PCA) protein is Probable transcriptional regulatory protein GSU1074.